A 72-amino-acid polypeptide reads, in one-letter code: MSCCGGSCGCGSGCKCGNGCGGCGMYPDMEKSATFSIVEGVAPVHNYGRVEEKAAGEGCKCGSNCTCDPCNC.

This sequence belongs to the metallothionein superfamily. Type 15 family.

Functionally, metallothioneins have a high content of cysteine residues that bind various heavy metals. This is Metallothionein-like protein type 2 from Solanum lycopersicum (Tomato).